The following is a 219-amino-acid chain: Uracil-DNA glycosylase (219 aa).

The active-site Proton acceptor is the aspartate 64.

The protein belongs to the uracil-DNA glycosylase (UDG) superfamily. UNG family.

Its subcellular location is the cytoplasm. It catalyses the reaction Hydrolyzes single-stranded DNA or mismatched double-stranded DNA and polynucleotides, releasing free uracil.. In terms of biological role, excises uracil residues from the DNA which can arise as a result of misincorporation of dUMP residues by DNA polymerase or due to deamination of cytosine. This is Uracil-DNA glycosylase from Leuconostoc citreum (strain KM20).